The sequence spans 178 residues: Large ribosomal subunit protein uL6 (178 aa).

The protein belongs to the universal ribosomal protein uL6 family. As to quaternary structure, part of the 50S ribosomal subunit.

Its function is as follows. This protein binds to the 23S rRNA, and is important in its secondary structure. It is located near the subunit interface in the base of the L7/L12 stalk, and near the tRNA binding site of the peptidyltransferase center. This is Large ribosomal subunit protein uL6 from Corynebacterium aurimucosum (strain ATCC 700975 / DSM 44827 / CIP 107346 / CN-1) (Corynebacterium nigricans).